The primary structure comprises 138 residues: Membrane protein P8A7 (138 aa).

The next 4 helical transmembrane spans lie at 12 to 30, 32 to 56, 71 to 90, and 93 to 118; these read ILVILAGCFITACGIYLFV, GLFHSIIGFVLGIYYLLAGVCIVLL, YTYWFGKGALISLIGLLILG, and GFFLAAGIIVIAVGIVCMIFHFLLGC.

Its subcellular location is the membrane. The sequence is that of Membrane protein P8A7 (pmpA) from Dictyostelium discoideum (Social amoeba).